The sequence spans 393 residues: Methylthioribose kinase (393 aa).

Residues Asn-38, Lys-53, and 107–109 each bind ATP; that span reads EDL. Asp-225 contributes to the substrate binding site. ATP is bound at residue 242-244; the sequence is DPE. Arg-332 is a substrate binding site.

It belongs to the methylthioribose kinase family. As to quaternary structure, homodimer.

The catalysed reaction is 5-(methylsulfanyl)-D-ribose + ATP = 5-(methylsulfanyl)-alpha-D-ribose 1-phosphate + ADP + H(+). Its pathway is amino-acid biosynthesis; L-methionine biosynthesis via salvage pathway; S-methyl-5-thio-alpha-D-ribose 1-phosphate from S-methyl-5'-thioadenosine (hydrolase route): step 2/2. In terms of biological role, catalyzes the phosphorylation of methylthioribose into methylthioribose-1-phosphate. In Bacillus thuringiensis subsp. konkukian (strain 97-27), this protein is Methylthioribose kinase.